Reading from the N-terminus, the 339-residue chain is tRNA N6-adenosine threonylcarbamoyltransferase (339 aa).

2 residues coordinate Fe cation: His-111 and His-115. Substrate is bound by residues 139–143, Asp-172, Gly-185, Asp-189, and Asn-280; that span reads LVSGG. Position 308 (Asp-308) interacts with Fe cation.

It belongs to the KAE1 / TsaD family. The cofactor is Fe(2+).

Its subcellular location is the cytoplasm. The catalysed reaction is L-threonylcarbamoyladenylate + adenosine(37) in tRNA = N(6)-L-threonylcarbamoyladenosine(37) in tRNA + AMP + H(+). Its function is as follows. Required for the formation of a threonylcarbamoyl group on adenosine at position 37 (t(6)A37) in tRNAs that read codons beginning with adenine. Is involved in the transfer of the threonylcarbamoyl moiety of threonylcarbamoyl-AMP (TC-AMP) to the N6 group of A37, together with TsaE and TsaB. TsaD likely plays a direct catalytic role in this reaction. The sequence is that of tRNA N6-adenosine threonylcarbamoyltransferase from Phocaeicola vulgatus (strain ATCC 8482 / DSM 1447 / JCM 5826 / CCUG 4940 / NBRC 14291 / NCTC 11154) (Bacteroides vulgatus).